A 298-amino-acid polypeptide reads, in one-letter code: Ribosomal RNA small subunit methyltransferase H (298 aa).

Residues 37-39 (GGH), Asp57, Leu91, Asp105, and Gln112 each bind S-adenosyl-L-methionine.

This sequence belongs to the methyltransferase superfamily. RsmH family.

The protein resides in the cytoplasm. It carries out the reaction cytidine(1402) in 16S rRNA + S-adenosyl-L-methionine = N(4)-methylcytidine(1402) in 16S rRNA + S-adenosyl-L-homocysteine + H(+). Functionally, specifically methylates the N4 position of cytidine in position 1402 (C1402) of 16S rRNA. In Kosmotoga olearia (strain ATCC BAA-1733 / DSM 21960 / TBF 19.5.1), this protein is Ribosomal RNA small subunit methyltransferase H.